The following is a 186-amino-acid chain: dITP/XTP pyrophosphatase (186 aa).

Position 7 to 12 (7 to 12 (TSNPGK)) interacts with substrate. The Mg(2+) site is built by E36 and D65. D65 functions as the Proton acceptor in the catalytic mechanism. Residues S66, 140 to 143 (FGYD), K163, and 168 to 169 (HR) contribute to the substrate site.

This sequence belongs to the HAM1 NTPase family. Homodimer. Mg(2+) serves as cofactor. It depends on Mn(2+) as a cofactor.

The enzyme catalyses XTP + H2O = XMP + diphosphate + H(+). The catalysed reaction is dITP + H2O = dIMP + diphosphate + H(+). It catalyses the reaction ITP + H2O = IMP + diphosphate + H(+). Functionally, pyrophosphatase that catalyzes the hydrolysis of nucleoside triphosphates to their monophosphate derivatives, with a high preference for the non-canonical purine nucleotides XTP (xanthosine triphosphate), dITP (deoxyinosine triphosphate) and ITP. Seems to function as a house-cleaning enzyme that removes non-canonical purine nucleotides from the nucleotide pool, thus preventing their incorporation into DNA/RNA and avoiding chromosomal lesions. This Pyrococcus horikoshii (strain ATCC 700860 / DSM 12428 / JCM 9974 / NBRC 100139 / OT-3) protein is dITP/XTP pyrophosphatase.